A 222-amino-acid polypeptide reads, in one-letter code: Ras-related protein Rab-21 (222 aa).

A2 carries the post-translational modification N-acetylalanine. G26, G29, K30, T31, S32, N43, D44, H46, T48, and T49 together coordinate GTP. T31 is a Mg(2+) binding site. Positions 41-54 match the Switch 1 motif; sequence KFNDKHITTLQASF. Mg(2+) contacts are provided by T49 and D72. Residues 74–92 carry the Switch 2 motif; the sequence is AGQERFHALGPIYYRDSNG. GTP is bound by residues G75, N130, K131, D133, A161, and K162. 2 S-geranylgeranyl cysteine lipidation sites follow: C218 and C219. Residue C219 is modified to Cysteine methyl ester. Positions 220-222 are cleaved as a propeptide — removed in mature form; the sequence is SSG.

This sequence belongs to the small GTPase superfamily. Rab family. In terms of assembly, interacts with the cytoplasmic tail of integrins ITGA1, ITGA2, ITGA5, ITGA6, ITGA11 and ITGB1; this interaction is dependent upon its GDP/GTP cycle. Interacts with RABGEF1 (via VPS9 domain). Interacts with ANKRD27. Interacts with VAMP7. Interacts (in GTP-bound form) with VAMP8 in response to starvation; the interaction probably regulates VAMP8 endolysosomal trafficking. Interacts (active GTP-bound form) with TMED10; the interaction is indirect and regulates TMED10 abundance and localization at the Golgi. Requires Mg(2+) as cofactor.

Its subcellular location is the endoplasmic reticulum membrane. It localises to the golgi apparatus. It is found in the trans-Golgi network. The protein localises to the golgi apparatus membrane. The protein resides in the early endosome membrane. Its subcellular location is the cytoplasmic vesicle membrane. It localises to the cleavage furrow. It is found in the cell projection. The protein localises to the neuron projection. It catalyses the reaction GTP + H2O = GDP + phosphate + H(+). With respect to regulation, regulated by guanine nucleotide exchange factors (GEFs) including ANKRD27 and RABGEF1, which promote the exchange of bound GDP for free GTP. Regulated by GTPase activating proteins (GAPs) which increase the GTP hydrolysis activity. Inhibited by GDP dissociation inhibitors (GDIs). The small GTPases Rab are key regulators of intracellular membrane trafficking, from the formation of transport vesicles to their fusion with membranes. Rabs cycle between an inactive GDP-bound form and an active GTP-bound form that is able to recruit to membranes different sets of downstream effectors directly responsible for vesicle formation, movement, tethering and fusion. RAB21 is involved in membrane trafficking control. Regulates integrin internalization and recycling, but does not influence the traffic of endosomally translocated receptors in general. As a result, may regulate cell adhesion and migration. During the mitosis of adherent cells, controls the endosomal trafficking of integrins which is required for the successful completion of cytokinesis. Involved in neurite growth. Following SBF2/MTMT13-mediated activation in response to starvation-induced autophagy, binds to and regulates SNARE protein VAMP8 endolysosomal transport required for SNARE-mediated autophagosome-lysosome fusion. Modulates protein levels of the cargo receptors TMED2 and TMED10, and required for appropriate Golgi localization of TMED10. The chain is Ras-related protein Rab-21 from Mus musculus (Mouse).